The chain runs to 126 residues: Iron-sulfur cluster insertion protein ErpA (126 aa).

The tract at residues Met1–Leu21 is disordered. Iron-sulfur cluster is bound by residues Cys54, Cys118, and Cys120.

The protein belongs to the HesB/IscA family. In terms of assembly, homodimer. Iron-sulfur cluster is required as a cofactor.

Functionally, required for insertion of 4Fe-4S clusters for at least IspG. The protein is Iron-sulfur cluster insertion protein ErpA of Psychrobacter arcticus (strain DSM 17307 / VKM B-2377 / 273-4).